We begin with the raw amino-acid sequence, 182 residues long: NADH-quinone oxidoreductase subunit 9 (182 aa).

4Fe-4S ferredoxin-type domains are found at residues 43–73 (LTRHPNGLEKCIGCSLCAAACPAYAIYVEPA) and 89–118 (KVYEINMLRCIFCGLCEEACPTGAIVLGYD). Residues Cys-53, Cys-56, Ser-57, Cys-59, Cys-63, Cys-98, Ile-99, Cys-101, Cys-104, and Cys-108 each contribute to the [4Fe-4S] cluster site.

It belongs to the complex I 23 kDa subunit family. As to quaternary structure, NDH-1 is composed of 15 different subunits, Nqo1 to Nqo15. The complex has a L-shaped structure, with the hydrophobic arm (subunits Nqo7, Nqo8 and Nqo10 to Nqo14) embedded in the membrane and the hydrophilic peripheral arm (subunits Nqo1 to Nqo6, Nqo9 and Nqo15) protruding into the bacterial cytoplasm. The hydrophilic domain contains all the redox centers. [4Fe-4S] cluster is required as a cofactor.

The protein resides in the cell membrane. The catalysed reaction is a quinone + NADH + 5 H(+)(in) = a quinol + NAD(+) + 4 H(+)(out). Its function is as follows. NDH-1 shuttles electrons from NADH, via FMN and iron-sulfur (Fe-S) centers, to quinones in the respiratory chain. The immediate electron acceptor for the enzyme in this species is menaquinone. Couples the redox reaction to proton translocation (for every two electrons transferred, four hydrogen ions are translocated across the cytoplasmic membrane), and thus conserves the redox energy in a proton gradient required for the synthesis of ATP. The role of the Nqo9 subunit appears to provide a 'connecting chain' of two clusters between cluster N5 and the terminal cluster N2, and to stabilize the structure of the complex by interacting with other subunits. In Thermus thermophilus (strain ATCC 27634 / DSM 579 / HB8), this protein is NADH-quinone oxidoreductase subunit 9 (nqo9).